Consider the following 402-residue polypeptide: Putative F-box protein At3g23960 (402 aa).

Residues 1–23 are disordered; sequence MRSRQLHNVSEDRETLSRRNKRS. An F-box domain is found at 26–73; it reads SLNGHIPIDLLIEIFLKLPVKSIATCRSVSKFWTYVLGRQDFTELFLT.

The protein is Putative F-box protein At3g23960 of Arabidopsis thaliana (Mouse-ear cress).